The chain runs to 318 residues: Acetyl-coenzyme A carboxylase carboxyl transferase subunit alpha (318 aa).

In terms of domain architecture, CoA carboxyltransferase C-terminal spans 32-293 (DLSQEIESLE…KKALQKHLGE (262 aa)).

The protein belongs to the AccA family. As to quaternary structure, acetyl-CoA carboxylase is a heterohexamer composed of biotin carboxyl carrier protein (AccB), biotin carboxylase (AccC) and two subunits each of ACCase subunit alpha (AccA) and ACCase subunit beta (AccD).

It localises to the cytoplasm. The enzyme catalyses N(6)-carboxybiotinyl-L-lysyl-[protein] + acetyl-CoA = N(6)-biotinyl-L-lysyl-[protein] + malonyl-CoA. The protein operates within lipid metabolism; malonyl-CoA biosynthesis; malonyl-CoA from acetyl-CoA: step 1/1. Functionally, component of the acetyl coenzyme A carboxylase (ACC) complex. First, biotin carboxylase catalyzes the carboxylation of biotin on its carrier protein (BCCP) and then the CO(2) group is transferred by the carboxyltransferase to acetyl-CoA to form malonyl-CoA. This Syntrophomonas wolfei subsp. wolfei (strain DSM 2245B / Goettingen) protein is Acetyl-coenzyme A carboxylase carboxyl transferase subunit alpha.